Consider the following 367-residue polypeptide: Anhydro-N-acetylmuramic acid kinase (367 aa).

An ATP-binding site is contributed by 10-17; sequence GTSLDGVD.

The protein belongs to the anhydro-N-acetylmuramic acid kinase family.

The enzyme catalyses 1,6-anhydro-N-acetyl-beta-muramate + ATP + H2O = N-acetyl-D-muramate 6-phosphate + ADP + H(+). It participates in amino-sugar metabolism; 1,6-anhydro-N-acetylmuramate degradation. It functions in the pathway cell wall biogenesis; peptidoglycan recycling. Its function is as follows. Catalyzes the specific phosphorylation of 1,6-anhydro-N-acetylmuramic acid (anhMurNAc) with the simultaneous cleavage of the 1,6-anhydro ring, generating MurNAc-6-P. Is required for the utilization of anhMurNAc either imported from the medium or derived from its own cell wall murein, and thus plays a role in cell wall recycling. In Aliivibrio fischeri (strain ATCC 700601 / ES114) (Vibrio fischeri), this protein is Anhydro-N-acetylmuramic acid kinase.